The chain runs to 485 residues: Adenosylhomocysteinase (485 aa).

Substrate contacts are provided by Thr-64, Asp-139, and Glu-205. An NAD(+)-binding site is contributed by 206–208 (TTT). The substrate site is built by Lys-235 and Asp-239. NAD(+) contacts are provided by residues Asn-240, 269–274 (GYGDVG), Glu-292, Asn-327, 348–350 (IGH), and Asn-397.

The protein belongs to the adenosylhomocysteinase family. It depends on NAD(+) as a cofactor.

It carries out the reaction S-adenosyl-L-homocysteine + H2O = L-homocysteine + adenosine. The protein operates within amino-acid biosynthesis; L-homocysteine biosynthesis; L-homocysteine from S-adenosyl-L-homocysteine: step 1/1. Functionally, adenosylhomocysteine is a competitive inhibitor of S-adenosyl-L-methionine-dependent methyl transferase reactions; therefore adenosylhomocysteinase may play a key role in the control of methylations via regulation of the intracellular concentration of adenosylhomocysteine. In Lupinus luteus (European yellow lupine), this protein is Adenosylhomocysteinase (SAHH).